We begin with the raw amino-acid sequence, 444 residues long: ATP-dependent protease ATPase subunit HslU (444 aa).

ATP is bound by residues isoleucine 18, 60 to 65, aspartate 256, glutamate 321, and arginine 393; that span reads GVGKTE.

This sequence belongs to the ClpX chaperone family. HslU subfamily. As to quaternary structure, a double ring-shaped homohexamer of HslV is capped on each side by a ring-shaped HslU homohexamer. The assembly of the HslU/HslV complex is dependent on binding of ATP.

It is found in the cytoplasm. In terms of biological role, ATPase subunit of a proteasome-like degradation complex; this subunit has chaperone activity. The binding of ATP and its subsequent hydrolysis by HslU are essential for unfolding of protein substrates subsequently hydrolyzed by HslV. HslU recognizes the N-terminal part of its protein substrates and unfolds these before they are guided to HslV for hydrolysis. The protein is ATP-dependent protease ATPase subunit HslU of Buchnera aphidicola subsp. Baizongia pistaciae (strain Bp).